The primary structure comprises 87 residues: Small ribosomal subunit protein bS20 (87 aa).

The disordered stretch occupies residues Met-1–Lys-22.

The protein belongs to the bacterial ribosomal protein bS20 family.

Binds directly to 16S ribosomal RNA. This is Small ribosomal subunit protein bS20 from Clavibacter sepedonicus (Clavibacter michiganensis subsp. sepedonicus).